Reading from the N-terminus, the 398-residue chain is Signal-regulatory protein beta-1 isoform 3 (398 aa).

The signal sequence occupies residues 1 to 29; that stretch reads MPVPASWPHLPSPFLLMTLLLGRLTGVAG. Over 30-371 the chain is Extracellular; sequence EEELQVIQPD…GPALASAAPL (342 aa). Residues 31 to 136 enclose the Ig-like V-type domain; it reads EELQVIQPDK…SPDHVEFKSG (106 aa). 2 disulfide bridges follow: C54/C120 and C169/C227. Ig-like C1-type domains are found at residues 147–246 and 253–347; these read PSAP…ANLS and PTLE…HDLK. 3 N-linked (GlcNAc...) asparagine glycosylation sites follow: N244, N291, and N318. A disulfide bond links C272 and C330. Over residues 337 to 354 the composition is skewed to basic and acidic residues; that stretch reads QPAVSKSHDLKVSAHPKE. The interval 337 to 361 is disordered; it reads QPAVSKSHDLKVSAHPKEQGSNTAP. Residues 372 to 392 form a helical membrane-spanning segment; that stretch reads LIAFLLGPKVLLVVGVSVIYV. The Cytoplasmic portion of the chain corresponds to 393–398; the sequence is YWKQKA.

The protein resides in the membrane. Its function is as follows. Immunoglobulin-like cell surface receptor involved in the negative regulation of receptor tyrosine kinase-coupled signaling processes. The polypeptide is Signal-regulatory protein beta-1 isoform 3 (SIRPB1) (Homo sapiens (Human)).